Reading from the N-terminus, the 180-residue chain is Bifunctional protein PyrR 1 (180 aa).

Substrate-binding positions include 39-40, 103-111, Arg136, and Val160; these read TR and DDVLFTGRT. A PRPP-binding motif is present at residues 99–111; the sequence is VILVDDVLFTGRT.

It belongs to the purine/pyrimidine phosphoribosyltransferase family. PyrR subfamily. As to quaternary structure, homodimer and homohexamer; in equilibrium.

The catalysed reaction is UMP + diphosphate = 5-phospho-alpha-D-ribose 1-diphosphate + uracil. Its function is as follows. Regulates transcriptional attenuation of the pyrimidine nucleotide (pyr) operon by binding in a uridine-dependent manner to specific sites on pyr mRNA. This disrupts an antiterminator hairpin in the RNA and favors formation of a downstream transcription terminator, leading to a reduced expression of downstream genes. Functionally, also displays a weak uracil phosphoribosyltransferase activity which is not physiologically significant. The polypeptide is Bifunctional protein PyrR 1 (pyrR1) (Lactiplantibacillus plantarum (strain ATCC BAA-793 / NCIMB 8826 / WCFS1) (Lactobacillus plantarum)).